Consider the following 63-residue polypeptide: uncharacterized protein (63 aa).

The chain crosses the membrane as a helical span at residues 20–40 (IVLLISFIFFFGRFIYSSVGA).

It localises to the membrane. This is an uncharacterized protein from Escherichia coli O157:H7.